We begin with the raw amino-acid sequence, 76 residues long: Exodeoxyribonuclease 7 small subunit (76 aa).

The protein belongs to the XseB family. In terms of assembly, heterooligomer composed of large and small subunits.

The protein localises to the cytoplasm. The enzyme catalyses Exonucleolytic cleavage in either 5'- to 3'- or 3'- to 5'-direction to yield nucleoside 5'-phosphates.. Bidirectionally degrades single-stranded DNA into large acid-insoluble oligonucleotides, which are then degraded further into small acid-soluble oligonucleotides. The protein is Exodeoxyribonuclease 7 small subunit of Geobacter metallireducens (strain ATCC 53774 / DSM 7210 / GS-15).